The sequence spans 486 residues: D-mannonate oxidoreductase (486 aa).

25 to 36 (IVHLGCGAFHRA) is an NAD(+) binding site.

It belongs to the mannitol dehydrogenase family. UxuB subfamily.

The enzyme catalyses D-mannonate + NAD(+) = keto-D-fructuronate + NADH + H(+). It participates in carbohydrate metabolism; pentose and glucuronate interconversion. This is D-mannonate oxidoreductase (uxuB) from Escherichia coli (strain K12).